Consider the following 425-residue polypeptide: Glutamate-1-semialdehyde 2,1-aminomutase (425 aa).

N6-(pyridoxal phosphate)lysine is present on lysine 265.

The protein belongs to the class-III pyridoxal-phosphate-dependent aminotransferase family. HemL subfamily. Homodimer. Pyridoxal 5'-phosphate is required as a cofactor.

Its subcellular location is the cytoplasm. It carries out the reaction (S)-4-amino-5-oxopentanoate = 5-aminolevulinate. It functions in the pathway porphyrin-containing compound metabolism; protoporphyrin-IX biosynthesis; 5-aminolevulinate from L-glutamyl-tRNA(Glu): step 2/2. The sequence is that of Glutamate-1-semialdehyde 2,1-aminomutase from Chromobacterium violaceum (strain ATCC 12472 / DSM 30191 / JCM 1249 / CCUG 213 / NBRC 12614 / NCIMB 9131 / NCTC 9757 / MK).